Consider the following 274-residue polypeptide: Bis(5'-nucleosyl)-tetraphosphatase, symmetrical (274 aa).

It belongs to the Ap4A hydrolase family.

It carries out the reaction P(1),P(4)-bis(5'-adenosyl) tetraphosphate + H2O = 2 ADP + 2 H(+). Its function is as follows. Hydrolyzes diadenosine 5',5'''-P1,P4-tetraphosphate to yield ADP. The protein is Bis(5'-nucleosyl)-tetraphosphatase, symmetrical of Buchnera aphidicola subsp. Acyrthosiphon pisum (strain Tuc7).